A 541-amino-acid chain; its full sequence is CTP synthase (541 aa).

Residues 1–265 (MTRFIFITGG…DAVVCRHFGL (265 aa)) are amidoligase domain. S13 is a CTP binding site. A UTP-binding site is contributed by S13. 14–19 (SLGKGL) is an ATP binding site. Y54 serves as a coordination point for L-glutamine. D71 lines the ATP pocket. Mg(2+) contacts are provided by D71 and E139. Residues 146-148 (DIE), 186-191 (KTKPTQ), and K222 each bind CTP. UTP contacts are provided by residues 186–191 (KTKPTQ) and K222. Residues 290-540 (TIAIVGKYIS…IAAAVRQSRL (251 aa)) enclose the Glutamine amidotransferase type-1 domain. G352 contacts L-glutamine. Residue C379 is the Nucleophile; for glutamine hydrolysis of the active site. L-glutamine-binding positions include 380 to 383 (FGMQ), E403, and R468. Catalysis depends on residues H513 and E515.

Belongs to the CTP synthase family. In terms of assembly, homotetramer.

The catalysed reaction is UTP + L-glutamine + ATP + H2O = CTP + L-glutamate + ADP + phosphate + 2 H(+). It catalyses the reaction L-glutamine + H2O = L-glutamate + NH4(+). It carries out the reaction UTP + NH4(+) + ATP = CTP + ADP + phosphate + 2 H(+). It participates in pyrimidine metabolism; CTP biosynthesis via de novo pathway; CTP from UDP: step 2/2. Its activity is regulated as follows. Allosterically activated by GTP, when glutamine is the substrate; GTP has no effect on the reaction when ammonia is the substrate. The allosteric effector GTP functions by stabilizing the protein conformation that binds the tetrahedral intermediate(s) formed during glutamine hydrolysis. Inhibited by the product CTP, via allosteric rather than competitive inhibition. In terms of biological role, catalyzes the ATP-dependent amination of UTP to CTP with either L-glutamine or ammonia as the source of nitrogen. Regulates intracellular CTP levels through interactions with the four ribonucleotide triphosphates. This is CTP synthase from Paramagnetospirillum magneticum (strain ATCC 700264 / AMB-1) (Magnetospirillum magneticum).